Here is a 52-residue protein sequence, read N- to C-terminus: Large ribosomal subunit protein bL33 (52 aa).

Belongs to the bacterial ribosomal protein bL33 family.

This Helicobacter pylori (strain HPAG1) protein is Large ribosomal subunit protein bL33.